We begin with the raw amino-acid sequence, 539 residues long: MGKGQPKEPKIEQSVVDLCKRTVAMNLLQCYPTTTVDEMNCEEWGNGTESTQSVAACQGCIELRKEVTDLRQAVNLILPMLPLYPTIGNGFNATGLAAQPTLQHVIQQSLLRKRPVAQTPTVPQPECPGQIRPVLSSPAAALQNVIMLNPWIMGSSLKPASPTLPNGQIPTTIGETSLQGTDDQTVKWIGPSSVDSNGQKTDSSAASAGDNQNIDVIGDGSESPTSSNHSAQEIALMTSQQTFLNALKDSSFLFTNPVPTVETAPPLRVAPPINGTTNGTAKAGGPERKPRKPVNDDIVKIVRNQDLSEENISMFEIPVPKAIASDPTFRPVSEQQIIQQIIQGKKYEEMEVGECMIQLCKKLAEKRVFGPRLMSQTTVAGLNHSNYANLPIKGICYIQHVCRKVLYDKFENEEDFWDKFREAMRKLAARCRRVRHAKKTKHNREEAQAEMLSKRYGEDMPFNLNGAGLIRPKVETVSPEANILNSDQIKSQLESLFAHIPKTESETPLIEIIQQNISLFTHLIRTKVESQSPPLQGPQ.

2 disordered regions span residues 162–230 and 262–293; these read PTLP…SNHS and ETAP…PRKP. Composition is skewed to polar residues over residues 163–183 and 193–214; these read TLPN…GTDD and SVDS…NQNI. Residues 274 to 284 show a composition bias toward low complexity; sequence NGTTNGTAKAG. The tract at residues 296-440 is involved in sequence-specific DNA-binding; that stretch reads DDIVKIVRNQ…CRRVRHAKKT (145 aa).

In terms of processing, cleaved by caspase ced-3 in vitro. As to expression, high levels in hypodermal, intestinal, body wall muscle, nerve ring, and ventral nerve cord cells of embryos and L1 animals.

It localises to the nucleus. In terms of biological role, heterochronic protein which controls the choice of stage specific cell fates. Involved in the temporal progression of vulval fate patterning, possibly by inhibiting lin-12. Acts as a transcription factor involved in the stage-specific repression of various genes, including insulin/insulin-like growth factor gene ins-33 and neuropeptide-encoding gene nlp-45. Binds to the consensus sequence 5'-[CT]GGA[AG]-3' in the regulatory elements of target genes. Plays a role in governing the developmental timing of male tail tip morphogenesis. Plays a role in controlling the timing of seam cell development during the larval stages. Plays a role in promoting survival at high temperatures in larvae. Involved in maintenance of the architecture of the ventral nerve cord, perhaps acting via modulating expression of the immunoglobulin domain gene zig-4. Its function is as follows. May specify L2 and later cell fates, creating a temporal switch. May be involved in specifying L1 cell fates. This chain is Protein lin-14, found in Caenorhabditis elegans.